Consider the following 376-residue polypeptide: Fibromodulin (376 aa).

A signal peptide spans 1–18; that stretch reads MQWASVLLLAGLCSLSQG. Q19 is subject to Pyrrolidone carboxylic acid. Y20, Y38, Y53, Y55, Y63, and Y65 each carry sulfotyrosine. One can recognise an LRRNT domain in the interval 67–105; that stretch reads APPPPEPRDCPQECDCPPNFPTAMYCDNRNLKYLPFVPS. LRR repeat units follow at residues 106-127, 130-151, 156-176, 177-198, 201-222, 224-245, 246-266, and 269-289; these read RMKY…VFDN, GLLW…RKVF, HLER…PLPR, SLRE…ALEG, NLTA…MRGL, SLIL…LPSA, LEQL…YFRG, and KLLY…ATNT. N127 is a glycosylation site (N-linked (GlcNAc...) (keratan sulfate) asparagine). N166 carries an N-linked (GlcNAc...) (keratan sulfate) asparagine glycan. N201 carries an N-linked (GlcNAc...) (keratan sulfate) asparagine glycan. N-linked (GlcNAc...) (keratan sulfate) asparagine glycosylation is present at N291. LRR repeat units follow at residues 294-315 and 316-335; these read SLLE…NTNL and ENLY…SFCT. A disulfide bridge links C334 with C367. N-linked (GlcNAc...) asparagine glycosylation is present at N341. Residues 344–367 form an LRR 11 repeat; it reads KLQVLRLDGNEIKRSAMPVDAPLC.

It belongs to the small leucine-rich proteoglycan (SLRP) family. SLRP class II subfamily. Binds to type I and type II collagen. Post-translationally, binds keratan sulfate chains. In terms of processing, sulfated on tyrosine residue(s). Highest levels observed in knee epiphysis, in calvarial and diaphyseal bone, in nasal and costal cartilage, in the eye, and in bladder. In mature knee joint it is mostly present in the proliferating zone of growth plate. It is also observed in ligaments, especially at insertion sites, in the junction between meniscus and joint capsule, in the perimysium of skeletal muscle and in the periosteum.

It is found in the secreted. The protein localises to the extracellular space. The protein resides in the extracellular matrix. Its function is as follows. Affects the rate of fibrils formation. May have a primary role in collagen fibrillogenesis. This is Fibromodulin (Fmod) from Mus musculus (Mouse).